Consider the following 111-residue polypeptide: Wound-induced proteinase inhibitor 1 (111 aa).

Residues 1–23 form the signal peptide; the sequence is MESKFAHIIVFFLLATSFETLMA. A propeptide spanning residues 24–36 is cleaved from the precursor; the sequence is RKEIDGPEVIELL.

This sequence belongs to the protease inhibitor I13 (potato type I serine protease inhibitor) family.

The protein resides in the secreted. The sequence is that of Wound-induced proteinase inhibitor 1 (PIIF) from Solanum lycopersicum (Tomato).